The chain runs to 527 residues: DNA polymerase epsilon subunit 2 (527 aa).

This sequence belongs to the DNA polymerase epsilon subunit B family. As to quaternary structure, component of the DNA polymerase epsilon complex consisting of four subunits: the catalytic subunit POLE and the accessory subunits POLE2, POLE3 and POLE4.

It is found in the nucleus. In terms of biological role, accessory component of the DNA polymerase epsilon complex. Participates in DNA repair and in chromosomal DNA replication. In Homo sapiens (Human), this protein is DNA polymerase epsilon subunit 2.